A 332-amino-acid polypeptide reads, in one-letter code: Fructose-1,6-bisphosphatase class 1 (332 aa).

Glutamate 89, aspartate 110, leucine 112, and aspartate 113 together coordinate Mg(2+). Residues aspartate 113–serine 116, asparagine 206, tyrosine 239, tyrosine 257–tyrosine 259, and lysine 269 contribute to the substrate site. Mg(2+) is bound at residue glutamate 275.

It belongs to the FBPase class 1 family. Homotetramer. It depends on Mg(2+) as a cofactor.

It localises to the cytoplasm. It carries out the reaction beta-D-fructose 1,6-bisphosphate + H2O = beta-D-fructose 6-phosphate + phosphate. It functions in the pathway carbohydrate biosynthesis; gluconeogenesis. This chain is Fructose-1,6-bisphosphatase class 1, found in Enterobacter sp. (strain 638).